Consider the following 226-residue polypeptide: Phosphoribosylformylglycinamidine synthase subunit PurQ (226 aa).

The region spanning 2-226 (KIAVIVFPGS…LENGTVIAEG (225 aa)) is the Glutamine amidotransferase type-1 domain. C86 (nucleophile) is an active-site residue. Active-site residues include H195 and E197.

As to quaternary structure, part of the FGAM synthase complex composed of 1 PurL, 1 PurQ and 2 PurS subunits.

It localises to the cytoplasm. It carries out the reaction N(2)-formyl-N(1)-(5-phospho-beta-D-ribosyl)glycinamide + L-glutamine + ATP + H2O = 2-formamido-N(1)-(5-O-phospho-beta-D-ribosyl)acetamidine + L-glutamate + ADP + phosphate + H(+). It catalyses the reaction L-glutamine + H2O = L-glutamate + NH4(+). It participates in purine metabolism; IMP biosynthesis via de novo pathway; 5-amino-1-(5-phospho-D-ribosyl)imidazole from N(2)-formyl-N(1)-(5-phospho-D-ribosyl)glycinamide: step 1/2. Functionally, part of the phosphoribosylformylglycinamidine synthase complex involved in the purines biosynthetic pathway. Catalyzes the ATP-dependent conversion of formylglycinamide ribonucleotide (FGAR) and glutamine to yield formylglycinamidine ribonucleotide (FGAM) and glutamate. The FGAM synthase complex is composed of three subunits. PurQ produces an ammonia molecule by converting glutamine to glutamate. PurL transfers the ammonia molecule to FGAR to form FGAM in an ATP-dependent manner. PurS interacts with PurQ and PurL and is thought to assist in the transfer of the ammonia molecule from PurQ to PurL. This is Phosphoribosylformylglycinamidine synthase subunit PurQ from Limosilactobacillus fermentum (strain NBRC 3956 / LMG 18251) (Lactobacillus fermentum).